The chain runs to 143 residues: Large-conductance mechanosensitive channel (143 aa).

The next 2 helical transmembrane spans lie at 10-30 (FAVK…GAFS) and 89-109 (GSFI…FLMV).

The protein belongs to the MscL family. As to quaternary structure, homopentamer.

It is found in the cell inner membrane. Functionally, channel that opens in response to stretch forces in the membrane lipid bilayer. May participate in the regulation of osmotic pressure changes within the cell. The sequence is that of Large-conductance mechanosensitive channel from Burkholderia pseudomallei (strain 668).